A 412-amino-acid chain; its full sequence is Multidrug resistance protein MdtG (412 aa).

10 helical membrane-spanning segments follow: residues 20–40 (LFVA…IMPF), 62–82 (LVFS…GGLA), 96–116 (LGMS…QFLI), 119–139 (ALLG…ATQI), 150–170 (TLST…GLLA), 177–197 (PVFF…LYFI), 225–245 (VLCL…IAPI), 260–280 (LAFI…MSAP), 294–314 (ILVA…LVQT), and 382–402 (TVFF…YWCL).

It belongs to the major facilitator superfamily. DHA1 family. MdtG (TC 2.A.1.2.20) subfamily.

It localises to the cell inner membrane. In Rahnella sp. (strain Y9602), this protein is Multidrug resistance protein MdtG.